The following is a 589-amino-acid chain: Aspartate--tRNA ligase (589 aa).

An L-aspartate-binding site is contributed by glutamate 176. Residues 200 to 203 (QLFK) are aspartate. Arginine 222 provides a ligand contact to L-aspartate. Residues 222 to 224 (RDE) and glutamine 231 each bind ATP. Position 449 (histidine 449) interacts with L-aspartate. Glutamate 483 is an ATP binding site. Arginine 490 serves as a coordination point for L-aspartate. 535 to 538 (GLDR) is an ATP binding site.

The protein belongs to the class-II aminoacyl-tRNA synthetase family. Type 1 subfamily. In terms of assembly, homodimer.

The protein resides in the cytoplasm. It catalyses the reaction tRNA(Asp) + L-aspartate + ATP = L-aspartyl-tRNA(Asp) + AMP + diphosphate. Functionally, catalyzes the attachment of L-aspartate to tRNA(Asp) in a two-step reaction: L-aspartate is first activated by ATP to form Asp-AMP and then transferred to the acceptor end of tRNA(Asp). This chain is Aspartate--tRNA ligase, found in Enterococcus faecalis (strain ATCC 700802 / V583).